A 955-amino-acid polypeptide reads, in one-letter code: Glycine dehydrogenase (decarboxylating) (955 aa).

Lys702 is subject to N6-(pyridoxal phosphate)lysine.

It belongs to the GcvP family. The glycine cleavage system is composed of four proteins: P, T, L and H. Pyridoxal 5'-phosphate serves as cofactor.

It carries out the reaction N(6)-[(R)-lipoyl]-L-lysyl-[glycine-cleavage complex H protein] + glycine + H(+) = N(6)-[(R)-S(8)-aminomethyldihydrolipoyl]-L-lysyl-[glycine-cleavage complex H protein] + CO2. In terms of biological role, the glycine cleavage system catalyzes the degradation of glycine. The P protein binds the alpha-amino group of glycine through its pyridoxal phosphate cofactor; CO(2) is released and the remaining methylamine moiety is then transferred to the lipoamide cofactor of the H protein. In Stenotrophomonas maltophilia (strain K279a), this protein is Glycine dehydrogenase (decarboxylating).